Consider the following 465-residue polypeptide: Phospholipase A1-II 5 (465 aa).

Residue S233 is the Acyl-ester intermediate of the active site. Residues S233, D297, and H336 each act as charge relay system in the active site.

This sequence belongs to the AB hydrolase superfamily. Lipase family.

The protein localises to the cytoplasm. Acylhydrolase that catalyzes the hydrolysis of phospholipids at the sn-1 position. This Oryza sativa subsp. indica (Rice) protein is Phospholipase A1-II 5.